We begin with the raw amino-acid sequence, 634 residues long: 1-deoxy-D-xylulose-5-phosphate synthase (634 aa).

Thiamine diphosphate-binding positions include histidine 74 and 115–117 (AHS). Position 146 (aspartate 146) interacts with Mg(2+). Residues 147-148 (GA), asparagine 176, tyrosine 283, and glutamate 365 contribute to the thiamine diphosphate site. Asparagine 176 contributes to the Mg(2+) binding site.

Belongs to the transketolase family. DXPS subfamily. Homodimer. Requires Mg(2+) as cofactor. Thiamine diphosphate is required as a cofactor.

It carries out the reaction D-glyceraldehyde 3-phosphate + pyruvate + H(+) = 1-deoxy-D-xylulose 5-phosphate + CO2. The protein operates within metabolic intermediate biosynthesis; 1-deoxy-D-xylulose 5-phosphate biosynthesis; 1-deoxy-D-xylulose 5-phosphate from D-glyceraldehyde 3-phosphate and pyruvate: step 1/1. In terms of biological role, catalyzes the acyloin condensation reaction between C atoms 2 and 3 of pyruvate and glyceraldehyde 3-phosphate to yield 1-deoxy-D-xylulose-5-phosphate (DXP). This chain is 1-deoxy-D-xylulose-5-phosphate synthase, found in Burkholderia orbicola (strain MC0-3).